Reading from the N-terminus, the 347-residue chain is GMP reductase (347 aa).

An NADP(+)-binding site is contributed by 108–131; sequence ADFEKTKQILAQSPALNFVCIDVA. Residues glycine 181 and glycine 183 each coordinate K(+). Cysteine 186 (thioimidate intermediate) is an active-site residue. 216-239 lines the NADP(+) pocket; sequence IVSDGGCTMPGDVAKAFGGGADFV.

This sequence belongs to the IMPDH/GMPR family. GuaC type 1 subfamily. Homotetramer.

It catalyses the reaction IMP + NH4(+) + NADP(+) = GMP + NADPH + 2 H(+). Its function is as follows. Catalyzes the irreversible NADPH-dependent deamination of GMP to IMP. It functions in the conversion of nucleobase, nucleoside and nucleotide derivatives of G to A nucleotides, and in maintaining the intracellular balance of A and G nucleotides. The chain is GMP reductase from Citrobacter koseri (strain ATCC BAA-895 / CDC 4225-83 / SGSC4696).